The chain runs to 150 residues: UPF0735 ACT domain-containing protein Helmi_18680 (150 aa).

The region spanning 72–147 (SVSLLLEHHP…GVRSAQLVGS (76 aa)) is the ACT domain.

Belongs to the UPF0735 family.

This is UPF0735 ACT domain-containing protein Helmi_18680 from Heliobacterium modesticaldum (strain ATCC 51547 / Ice1).